The chain runs to 504 residues: Myocilin (504 aa).

Residues methionine 1–alanine 32 form the signal peptide. The N-linked (GlcNAc...) asparagine glycan is linked to asparagine 57. A coiled-coil region spans residues leucine 74 to glutamine 184. Disordered regions lie at residues glutamine 106–leucine 131 and leucine 170–arginine 200. Over residues glycine 122–leucine 131 the composition is skewed to basic and acidic residues. Residues glycine 244–lysine 503 enclose the Olfactomedin-like domain. The cysteines at positions 245 and 433 are disulfide-linked. 5 residues coordinate Ca(2+): aspartate 380, asparagine 428, alanine 429, isoleucine 477, and aspartate 478. The Microbody targeting signal motif lies at serine 502–methionine 504.

Homodimer (via N-terminus). Can also form higher oligomers. Interacts with OLFM3, FN1, NRCAM, GLDN and NFASC. Interacts (via N-terminus) with MYL2. Interacts with SFRP1, FRZB, FZD7, FZD10, FZD1 and WIF1; regulates Wnt signaling. Interacts with SNTA1; regulates muscle hypertrophy. Interacts with ERBB2 and ERBB3; activates ERBB2-ERBB3 signaling pathway. Interacts with SNCG; affects its secretion and its aggregation. Post-translationally, different isoforms may arise by post-translational modifications. Glycosylated. In terms of processing, palmitoylated. Post-translationally, undergoes a calcium-dependent proteolytic cleavage at Arg-226 by CAPN2 in the endoplasmic reticulum. The result is the production of two fragments, one of 35 kDa containing the C-terminal olfactomedin-like domain, and another of 20 kDa containing the N-terminal leucine zipper-like domain. Detected in aqueous humor. Detected in the eye (at protein level). Widely expressed. Highly expressed in various types of muscle, ciliary body, papillary sphincter, skeletal muscle, heart, and bone marrow-derived mesenchymal stem cells. Expressed predominantly in the retina. In normal eyes, found in the inner uveal meshwork region and the anterior portion of the meshwork. In contrast, in many glaucomatous eyes, it is found in more regions of the meshwork and seems to be expressed at higher levels than in normal eyes, regardless of the type or clinical severity of glaucoma. The myocilin 35 kDa fragment is detected in aqueous humor and to a lesser extent in iris and ciliary body.

Its subcellular location is the secreted. The protein resides in the golgi apparatus. The protein localises to the cytoplasmic vesicle. It localises to the extracellular space. It is found in the extracellular matrix. Its subcellular location is the extracellular exosome. The protein resides in the mitochondrion. The protein localises to the mitochondrion intermembrane space. It localises to the mitochondrion inner membrane. It is found in the mitochondrion outer membrane. Its subcellular location is the rough endoplasmic reticulum. The protein resides in the cell projection. The protein localises to the cilium. It localises to the endoplasmic reticulum. Its function is as follows. Secreted glycoprotein regulating the activation of different signaling pathways in adjacent cells to control different processes including cell adhesion, cell-matrix adhesion, cytoskeleton organization and cell migration. Promotes substrate adhesion, spreading and formation of focal contacts. Negatively regulates cell-matrix adhesion and stress fiber assembly through Rho protein signal transduction. Modulates the organization of actin cytoskeleton by stimulating the formation of stress fibers through interactions with components of Wnt signaling pathways. Promotes cell migration through activation of PTK2 and the downstream phosphatidylinositol 3-kinase signaling. Plays a role in bone formation and promotes osteoblast differentiation in a dose-dependent manner through mitogen-activated protein kinase signaling. Mediates myelination in the peripheral nervous system through ERBB2/ERBB3 signaling. Plays a role as a regulator of muscle hypertrophy through the components of dystrophin-associated protein complex. Involved in positive regulation of mitochondrial depolarization. Plays a role in neurite outgrowth. May participate in the obstruction of fluid outflow in the trabecular meshwork. The chain is Myocilin (MYOC) from Homo sapiens (Human).